Here is a 926-residue protein sequence, read N- to C-terminus: Chitin synthase-like protein 2 (926 aa).

Residues 1–56 form a disordered region; it reads MSFQNPSYINAKHRSFLQPKDTQDSQDLRNWVSHSSVDEETAYSSSTLSSSSSKSF. Low complexity predominate over residues 44–55; it reads SSSTLSSSSSKS. Transmembrane regions (helical) follow at residues 564 to 584, 599 to 619, 641 to 661, 671 to 691, 721 to 741, 853 to 873, and 885 to 905; these read INSS…LWTT, LVFA…FLAF, LFLV…MLAM, LLFI…FCVF, LLIL…FFIF, VLVW…VFDG, and IFWS…TFIA.

It belongs to the chitin synthase family.

The protein resides in the membrane. Its function is as follows. Plays a role in septum formation. Has no chitin synthase activity. The sequence is that of Chitin synthase-like protein 2 (chs2) from Schizosaccharomyces pombe (strain 972 / ATCC 24843) (Fission yeast).